The following is a 296-amino-acid chain: CTD kinase subunit gamma (296 aa).

Positions Arg-25–Asn-44 are disordered. The span at Thr-29–Ser-39 shows a compositional bias: low complexity. At Thr-35 the chain carries Phosphothreonine.

The protein belongs to the CTK3 family. As to quaternary structure, CTDK-I consists of three subunits, CTK1, CTK2 and CTK3 (also called alpha, beta and gamma). Interacts with CTK1. Heterodimerization with CTK2 is required to protect this subunit from degradation. In terms of processing, ubiquitinated. Ubiquitination leads to degradation by the 26S proteasome pathway.

It localises to the nucleus. Its subcellular location is the nucleolus. The protein localises to the cytoplasm. Its function is as follows. Gamma subunit of the CTDK-I complex, which hyperphosphorylates the C-terminal heptapeptide repeat domain (CTD) of the largest RNA polymerase II subunit. CTDK-I phosphorylates 'Ser-5' if the CTD substrate is not phosphorylated at 'Ser-5', but will phosphorylate 'Ser-2' of a CTD substrate if 'Ser-5' is already phosphorylated. CTDK-I is also more reactive toward substrates that are prephosphorylated at 'Ser-2' or 'Ser-5' compared with an unphosphorylated CTD substrate, therefore efficiently creating doubly phosphorylated CTD repeats. Involved in RNA polymerase I transcription and RNA polymerase II transcriptional elongation, and as part of the CTDK-I complex, pre-mRNA 3'-end processing and SET2 mediated H3K36 methylation. Together with CTK2, required for CTK1 CTD kinase activation. Required for DNA damage induced transcription. Involved in the adaptation to alternative carbon sources, including galactose, glycerol and ethanol, but not raffinose. Required for the integrity of the rDNA locus. This is CTD kinase subunit gamma (CTK3) from Saccharomyces cerevisiae (strain ATCC 204508 / S288c) (Baker's yeast).